A 577-amino-acid chain; its full sequence is Proline--tRNA ligase (577 aa).

The protein belongs to the class-II aminoacyl-tRNA synthetase family. ProS type 1 subfamily. Homodimer.

It is found in the cytoplasm. The catalysed reaction is tRNA(Pro) + L-proline + ATP = L-prolyl-tRNA(Pro) + AMP + diphosphate. Catalyzes the attachment of proline to tRNA(Pro) in a two-step reaction: proline is first activated by ATP to form Pro-AMP and then transferred to the acceptor end of tRNA(Pro). As ProRS can inadvertently accommodate and process non-cognate amino acids such as alanine and cysteine, to avoid such errors it has two additional distinct editing activities against alanine. One activity is designated as 'pretransfer' editing and involves the tRNA(Pro)-independent hydrolysis of activated Ala-AMP. The other activity is designated 'posttransfer' editing and involves deacylation of mischarged Ala-tRNA(Pro). The misacylated Cys-tRNA(Pro) is not edited by ProRS. This is Proline--tRNA ligase from Chlamydia felis (strain Fe/C-56) (Chlamydophila felis).